Consider the following 664-residue polypeptide: Frizzled-3 (664 aa).

Positions M1–A16 are cleaved as a signal peptide. The Extracellular segment spans residues Q17–F204. Positions H22–P135 constitute an FZ domain. Disulfide bonds link C27–C88, C35–C81, C72–C109, C98–C132, and C102–C126. N-linked (GlcNAc...) asparagine glycosylation is present at N41. Residues I205–I225 form a helical membrane-spanning segment. Residues D226–P236 lie on the Cytoplasmic side of the membrane. Residues I237–L257 traverse the membrane as a helical segment. Residues E258–M287 lie on the Extracellular side of the membrane. The helical transmembrane segment at L288–I308 threads the bilayer. Over T309–A327 the chain is Cytoplasmic. Residues L328–M348 form a helical membrane-spanning segment. Over N349 to F373 the chain is Extracellular. Residue N355 is glycosylated (N-linked (GlcNAc...) asparagine). Residues V374 to I394 traverse the membrane as a helical segment. Residues S395–R419 lie on the Cytoplasmic side of the membrane. A helical transmembrane segment spans residues I420–Y440. At E441 to L476 the chain is on the extracellular side. The helical transmembrane segment at I477–V497 threads the bilayer. Topologically, residues G498–A664 are cytoplasmic. The short motif at K501–W506 is the Lys-Thr-X-X-X-Trp motif, mediates interaction with the PDZ domain of Dvl family members element. The disordered stretch occupies residues R537–A664. Polar residues-rich tracts occupy residues G549–L564 and K573–H585.

The protein belongs to the G-protein coupled receptor Fz/Smo family. As to expression, expression restricted to the early nervous system.

Its subcellular location is the membrane. It localises to the cell membrane. The protein localises to the cell surface. It is found in the apical cell membrane. Functionally, receptor for Wnt proteins. Most of frizzled receptors are coupled to the beta-catenin canonical signaling pathway, which leads to the activation of disheveled proteins, inhibition of GSK-3 kinase, nuclear accumulation of beta-catenin and activation of Wnt target genes. A second signaling pathway involving PKC and calcium fluxes has been seen for some family members, but it is not yet clear if it represents a distinct pathway or if it can be integrated in the canonical pathway, as PKC seems to be required for Wnt-mediated inactivation of GSK-3 kinase. Both pathways seem to involve interactions with G-proteins. Activated by Wnt8. Involved in transduction and intercellular transmission of polarity information during tissue morphogenesis and/or in differentiated tissues. Plays a role in controlling early axon growth and guidance processes necessary for the formation of a subset of central and peripheral major fiber tracts. Involved in the migration of cranial neural crest cells. May also be implicated in the transmission of sensory information from the trunk and limbs to the brain. Controls commissural sensory axons guidance after midline crossing along the anterior-posterior axis in the developing spinal cord in a Wnt-dependent signaling pathway. Together with FZD6, is involved in the neural tube closure and plays a role in the regulation of the establishment of planar cell polarity (PCP). Promotes neurogenesis by maintaining sympathetic neuroblasts within the cell cycle in a beta-catenin-dependent manner. In Xenopus laevis (African clawed frog), this protein is Frizzled-3 (fzd3).